A 1043-amino-acid chain; its full sequence is P3N-PIPO polyprotein (1043 aa).

Residues 219–362 (KMNDQGVDML…RTMSHKIVHF (144 aa)) form the Peptidase S30 domain. Catalysis depends on for P1 proteinase activity residues His-270, Asp-279, and Ser-313. The short motif at 414 to 417 (KITC) is the Involved in interaction with stylet and aphid transmission element. The Involved in virions binding and aphid transmission motif lies at 672–674 (PTK). Residues 698–820 (MYIAKEGYCY…ESSLKHYRVG (123 aa)) form the Peptidase C6 domain. Residues Cys-706 and His-779 each act as for helper component proteinase activity in the active site.

It belongs to the potyviridae P3N-PIPO polyprotein family. As to quaternary structure, interacts (via PIPO domain) with host PCaP1 protein; this interaction may help to anchor the movement complex to the plasma membrane from which the complex could move to the plasmodesmata. Post-translationally, potyviral RNA is expressed as two polyproteins which undergo post-translational proteolytic processing. Genome polyprotein is processed by NIa-pro, P1 and HC-pro proteinases resulting in the production of at least ten individual proteins. P3N-PIPO is cleaved by P1 and HC-pro proteinases resulting in the production of three individual proteins. The P1 proteinase and the HC-pro cleave only their respective C-termini autocatalytically.

The protein resides in the host cell junction. It localises to the host plasmodesma. It carries out the reaction Hydrolyzes a Gly-|-Gly bond at its own C-terminus, commonly in the sequence -Tyr-Xaa-Val-Gly-|-Gly, in the processing of the potyviral polyprotein.. Its function is as follows. Cysteine protease that cleaves a Gly-Gly dipeptide at its own C-terminus. Required for aphid transmission and also has proteolytic activity. Interacts with virions and aphid stylets. Acts as a suppressor of RNA-mediated gene silencing, also known as post-transcriptional gene silencing (PTGS), a mechanism of plant viral defense that limits the accumulation of viral RNAs. May have RNA-binding activity. In terms of biological role, allows efficient cell to cell propagation, by bypassing the host cell wall barrier. Transports viral genome to neighboring plant cells directly through plasmosdesmata, without any budding. The protein is P3N-PIPO polyprotein of Alliaria petiolata (Garlic mustard).